A 184-amino-acid chain; its full sequence is ATP-dependent protease subunit HslV (184 aa).

Threonine 12 is a catalytic residue. Na(+) is bound by residues alanine 166, cysteine 169, and threonine 172.

The protein belongs to the peptidase T1B family. HslV subfamily. As to quaternary structure, a double ring-shaped homohexamer of HslV is capped on each side by a ring-shaped HslU homohexamer. The assembly of the HslU/HslV complex is dependent on binding of ATP.

The protein localises to the cytoplasm. It carries out the reaction ATP-dependent cleavage of peptide bonds with broad specificity.. Allosterically activated by HslU binding. In terms of biological role, protease subunit of a proteasome-like degradation complex believed to be a general protein degrading machinery. This is ATP-dependent protease subunit HslV from Nitrobacter hamburgensis (strain DSM 10229 / NCIMB 13809 / X14).